The sequence spans 415 residues: Multifunctional CCA protein (415 aa).

ATP is bound by residues Gly-8 and Arg-11. Positions 8 and 11 each coordinate CTP. Asp-21 and Asp-23 together coordinate Mg(2+). ATP is bound by residues Arg-91, Arg-137, and Arg-140. Positions 91, 137, and 140 each coordinate CTP. Positions 228 to 329 (TGIHTLMTLA…VGLFDSIDAW (102 aa)) constitute an HD domain.

This sequence belongs to the tRNA nucleotidyltransferase/poly(A) polymerase family. Bacterial CCA-adding enzyme type 1 subfamily. In terms of assembly, monomer. Can also form homodimers and oligomers. It depends on Mg(2+) as a cofactor. Requires Ni(2+) as cofactor.

The enzyme catalyses a tRNA precursor + 2 CTP + ATP = a tRNA with a 3' CCA end + 3 diphosphate. It carries out the reaction a tRNA with a 3' CCA end + 2 CTP + ATP = a tRNA with a 3' CCACCA end + 3 diphosphate. In terms of biological role, catalyzes the addition and repair of the essential 3'-terminal CCA sequence in tRNAs without using a nucleic acid template. Adds these three nucleotides in the order of C, C, and A to the tRNA nucleotide-73, using CTP and ATP as substrates and producing inorganic pyrophosphate. tRNA 3'-terminal CCA addition is required both for tRNA processing and repair. Also involved in tRNA surveillance by mediating tandem CCA addition to generate a CCACCA at the 3' terminus of unstable tRNAs. While stable tRNAs receive only 3'-terminal CCA, unstable tRNAs are marked with CCACCA and rapidly degraded. This chain is Multifunctional CCA protein, found in Cronobacter sakazakii (strain ATCC BAA-894) (Enterobacter sakazakii).